The following is a 634-amino-acid chain: MAQETMSFQAEVKQLLHLMIHSLYSNKEIFLRELISNASDAADKLRFEAIENSALYENDPNLRIRVSYDKDARTITIDDNGIGMSRDEAIANLGTIARSGTKEFFGKLSGDQQKDAALIGQFGVGFYSGFIVADRITVETRRAGLPASEGVRWESAGEGDFAVEQIERAARGTTITLHLRADEDELLSSHRLKSIIQKYSDHVALPILMKKEEWDAEKSAMVTKDEDETVNQASALWTRSKSDITDEQYKQFYQHLSHDHQDPLTWTHNRVEGRSEYTQLLYVPTHAPFDMFNRDHRGGLKLYVKRVFIMDDAEQLLPAYLRFVKGVVDSADLPLNVSREILQESRDVKAIREGVTKRVLSMLEDLANSDNEADKEKYAGFWKEFGQVLKEGIGEDFANRERIAKLLRFASTHTDTPEQTVSLADYVARMKPEQTKIYYVTADTWQAATHSPHLEVFRKKGVEVLLLTDRVDEWILSFLTEFEGKPLQSVARGDLDLGALNDEEKEAQEKVSEEFKPLVEKMKEALKDKAKDVRLTFRLTDSPSCLVADDGEMSGYLQRMLKAAGQQAPSFHPILEVNPEHALVKGLHADSANFDDWCHLLFDQALLAEGGALEDPASFVKRTNALLLARANEA.

The interval 1-339 (MAQETMSFQA…SADLPLNVSR (339 aa)) is a; substrate-binding. The segment at 340–559 (EILQESRDVK…DGEMSGYLQR (220 aa)) is b. The interval 560–634 (MLKAAGQQAP…ALLLARANEA (75 aa)) is c.

Belongs to the heat shock protein 90 family. As to quaternary structure, homodimer.

Its subcellular location is the cytoplasm. Functionally, molecular chaperone. Has ATPase activity. The polypeptide is Chaperone protein HtpG (Paraburkholderia xenovorans (strain LB400)).